Consider the following 863-residue polypeptide: Penicillin-binding protein 1A (863 aa).

The Cytoplasmic segment spans residues 1–28; that stretch reads MTENRDNKTSQSEKTTQKKKKKKFKAFK. A helical; Signal-anchor for type II membrane protein membrane pass occupies residues 29–49; sequence IILITFITLIVISLVTAIGIT. The Extracellular segment spans residues 50 to 863; it reads LAIIKTSPDI…KPIIRPKKHF (814 aa). The transglycosylase stretch occupies residues 71-248; sequence SKIYDDKGEL…PSVYYPYSRT (178 aa). Glu110 (proton donor; for transglycosylase activity) is an active-site residue. The transpeptidase stretch occupies residues 392-674; the sequence is ASAVLTDYHT…AAALFGKIMN (283 aa). Catalysis depends on Ser431, which acts as the Acyl-ester intermediate; for transpeptidase activity. The disordered stretch occupies residues 774–863; it reads DDDMYVLPDK…KPIIRPKKHF (90 aa). Polar residues predominate over residues 808-836; it reads EDATNEASTEPSPNTDTVPEDSTNNLDPT. Positions 837 to 846 are enriched in basic and acidic residues; it reads KNTEKKPSDK. Over residues 847–863 the composition is skewed to basic residues; it reads KNKKHVIKPIIRPKKHF.

The protein in the N-terminal section; belongs to the glycosyltransferase 51 family. This sequence in the C-terminal section; belongs to the transpeptidase family.

It localises to the cell membrane. It carries out the reaction [GlcNAc-(1-&gt;4)-Mur2Ac(oyl-L-Ala-gamma-D-Glu-L-Lys-D-Ala-D-Ala)](n)-di-trans,octa-cis-undecaprenyl diphosphate + beta-D-GlcNAc-(1-&gt;4)-Mur2Ac(oyl-L-Ala-gamma-D-Glu-L-Lys-D-Ala-D-Ala)-di-trans,octa-cis-undecaprenyl diphosphate = [GlcNAc-(1-&gt;4)-Mur2Ac(oyl-L-Ala-gamma-D-Glu-L-Lys-D-Ala-D-Ala)](n+1)-di-trans,octa-cis-undecaprenyl diphosphate + di-trans,octa-cis-undecaprenyl diphosphate + H(+). The enzyme catalyses Preferential cleavage: (Ac)2-L-Lys-D-Ala-|-D-Ala. Also transpeptidation of peptidyl-alanyl moieties that are N-acyl substituents of D-alanine.. It functions in the pathway cell wall biogenesis; peptidoglycan biosynthesis. Its function is as follows. Cell wall formation. Synthesis of cross-linked peptidoglycan from the lipid intermediates. The enzyme has a penicillin-insensitive transglycosylase N-terminal domain (formation of linear glycan strands) and a penicillin-sensitive transpeptidase C-terminal domain (cross-linking of the peptide subunits). The chain is Penicillin-binding protein 1A (pbpA) from Clostridium novyi (strain NT).